Consider the following 378-residue polypeptide: Putative zinc finger protein C09F5.3 (378 aa).

The segment covering 1-14 has biased composition (basic residues); it reads MRKTEKMKRPHNSS. Disordered regions lie at residues 1-36 and 61-80; these read MRKTEKMKRPHNSSHVKQEERADDSHSNSPASSKSI and TLSEHVPEKKPSISTSNSAP. 2 stretches are compositionally biased toward basic and acidic residues: residues 16 to 26 and 62 to 71; these read VKQEERADDSH and LSEHVPEKKP. The C2H2-type 1 zinc finger occupies 42 to 65; that stretch reads LKCELCSTVCSSISQLQSHTLSEH. The C2H2-type 2; degenerate zinc-finger motif lies at 85 to 107; it reads VACQQCEDTFEDFAQFAIHMKSH. The segment at 204 to 226 adopts a C2H2-type 3; degenerate zinc-finger fold; that stretch reads YGCALCATSYPSQLHLITHVQMS. Residues 231–250 are disordered; the sequence is TFYPPSLPIPTPPSPKSTPK. The segment covering 235–246 has biased composition (pro residues); sequence PSLPIPTPPSPK. C2H2-type zinc fingers lie at residues 254–277, 284–306, 312–334, and 355–377; these read LQCSVCDESVLGEDGLDEHRLRKH, DKCADCQEPLLNETSFVEHCLRH, HHCPVCRQSLRSDSQIHAHCAYH, and FVCPICGEKLDDGFALIEHTKIH.

It is found in the nucleus. This chain is Putative zinc finger protein C09F5.3, found in Caenorhabditis elegans.